We begin with the raw amino-acid sequence, 1217 residues long: ATP-dependent helicase/nuclease subunit A (1217 aa).

In terms of domain architecture, UvrD-like helicase ATP-binding spans 10-475 (VIWTDAQWQS…IDLSQNFRSR (466 aa)). Position 31–38 (31–38 (AAAGSGKT)) interacts with ATP. One can recognise a UvrD-like helicase C-terminal domain in the interval 476–786 (KEVLSTTNYI…RMMTIHSSKG (311 aa)).

The protein belongs to the helicase family. AddA subfamily. As to quaternary structure, heterodimer of AddA and AddB/RexB. The cofactor is Mg(2+).

The catalysed reaction is Couples ATP hydrolysis with the unwinding of duplex DNA by translocating in the 3'-5' direction.. It catalyses the reaction ATP + H2O = ADP + phosphate + H(+). Functionally, the heterodimer acts as both an ATP-dependent DNA helicase and an ATP-dependent, dual-direction single-stranded exonuclease. Recognizes the chi site generating a DNA molecule suitable for the initiation of homologous recombination. The AddA nuclease domain is required for chi fragment generation; this subunit has the helicase and 3' -&gt; 5' nuclease activities. This Staphylococcus aureus (strain NCTC 8325 / PS 47) protein is ATP-dependent helicase/nuclease subunit A.